A 293-amino-acid polypeptide reads, in one-letter code: Tyrosine recombinase XerD (293 aa).

A Core-binding (CB) domain is found at 1–83 (MHGLIADFIH…ALRKFYRFLL (83 aa)). The Tyr recombinase domain maps to 104–287 (HLPATLSGTE…SNQHLVAVYH (184 aa)). Catalysis depends on residues arginine 144, lysine 168, histidine 239, arginine 242, and histidine 265. The O-(3'-phospho-DNA)-tyrosine intermediate role is filled by tyrosine 274.

This sequence belongs to the 'phage' integrase family. XerD subfamily. In terms of assembly, forms a cyclic heterotetrameric complex composed of two molecules of XerC and two molecules of XerD.

The protein localises to the cytoplasm. In terms of biological role, site-specific tyrosine recombinase, which acts by catalyzing the cutting and rejoining of the recombining DNA molecules. The XerC-XerD complex is essential to convert dimers of the bacterial chromosome into monomers to permit their segregation at cell division. It also contributes to the segregational stability of plasmids. This is Tyrosine recombinase XerD from Lacticaseibacillus casei (Lactobacillus casei).